Consider the following 44-residue polypeptide: Photosystem I reaction center subunit IX (44 aa).

Residues 9–29 (FMRSAPIVAAIWISLTAGIII) form a helical membrane-spanning segment.

The protein belongs to the PsaJ family.

It is found in the cellular thylakoid membrane. In terms of biological role, may help in the organization of the PsaE and PsaF subunits. This Prochlorococcus marinus (strain MIT 9515) protein is Photosystem I reaction center subunit IX.